Here is a 204-residue protein sequence, read N- to C-terminus: Peptidyl-tRNA hydrolase 2 (204 aa).

Tyr-37 contacts tRNA. His-42 (proton acceptor) is an active-site residue. Residues Phe-86, Asn-88, and Asn-134 each coordinate tRNA.

The protein belongs to the PTH family. As to quaternary structure, monomer.

The protein resides in the cytoplasm. The enzyme catalyses an N-acyl-L-alpha-aminoacyl-tRNA + H2O = an N-acyl-L-amino acid + a tRNA + H(+). Hydrolyzes ribosome-free peptidyl-tRNAs (with 1 or more amino acids incorporated), which drop off the ribosome during protein synthesis, or as a result of ribosome stalling. Functionally, catalyzes the release of premature peptidyl moieties from peptidyl-tRNA molecules trapped in stalled 50S ribosomal subunits, and thus maintains levels of free tRNAs and 50S ribosomes. This chain is Peptidyl-tRNA hydrolase 2, found in Corynebacterium glutamicum (strain ATCC 13032 / DSM 20300 / JCM 1318 / BCRC 11384 / CCUG 27702 / LMG 3730 / NBRC 12168 / NCIMB 10025 / NRRL B-2784 / 534).